Consider the following 494-residue polypeptide: MPRVYIGRLSYQARERDVERFFKGYGKILEVDLKNGYGFVEFDDLRDADDAVYELNGKDLCGERVIVEHARGPRRDGSYGSGRSGYGYRRSGRDKYGPPTRTEYRLIVENLSSRCSWQDLKDYMRQAGEVTYADAHKGRKNEGVIEFVSYSDMKRALEKLDGTEVNGRKIRLVEDKPGSRRRRSYSRSRSHSRSRSRSRHSRKSRSRSGSSKSSHSKSRSRSRSGSRSRSKSRSRSQSRSRSKKEKSRSPSKEKSRSRSHSAGKSRSKSKDQAEEKIQNNDNVGKPKSRSPSRHKSKSKSRSRSQERRVEEEKRGSVSRGRSQEKSLRQSRSRSRSKGGSRSRSRSRSKSKDKRKGRKRSREESRSRSRSRSKSERSRKRGSKRDSKAGSSKKKKKEDTDRSQSRSPSRSVSKEREHAKSESSQREGRGESENAGTNQETRSRSRSNSKSKPNLPSESRSRSKSASKTRSRSKSRSRSASRSPSRSRSRSHSRS.

The region spanning 2–72 (PRVYIGRLSY…ERVIVEHARG (71 aa)) is the RRM 1 domain. Disordered regions lie at residues 72 to 95 (GPRRDGSYGSGRSGYGYRRSGRDK) and 169 to 494 (KIRL…HSRS). Phosphoserine occurs at positions 78 and 84. Positions 104 to 177 (YRLIVENLSS…RKIRLVEDKP (74 aa)) constitute an RRM 2 domain. Composition is skewed to basic residues over residues 179–206 (SRRRRSYSRSRSHSRSRSRSRHSRKSRS) and 214–246 (SHSKSRSRSRSGSRSRSKSRSRSQSRSRSKKEK). Over residues 247 to 256 (SRSPSKEKSR) the composition is skewed to basic and acidic residues. The segment covering 257–267 (SRSHSAGKSRS) has biased composition (basic residues). Residues 268–278 (KSKDQAEEKIQ) show a composition bias toward basic and acidic residues. Basic residues predominate over residues 286 to 302 (PKSRSPSRHKSKSKSRS). Ser-288, Ser-290, and Ser-292 each carry phosphoserine. A compositionally biased stretch (basic and acidic residues) spans 303 to 327 (RSQERRVEEEKRGSVSRGRSQEKSL). 2 stretches are compositionally biased toward basic residues: residues 328–359 (RQSRSRSRSKGGSRSRSRSRSKSKDKRKGRKR) and 367–382 (RSRSRSKSERSRKRGS). Positions 411 to 431 (VSKEREHAKSESSQREGRGES) are enriched in basic and acidic residues. Residues Ser-431, Ser-446, Ser-456, Ser-458, and Ser-460 each carry the phosphoserine modification. Over residues 449 to 460 (KSKPNLPSESRS) the composition is skewed to low complexity. A compositionally biased stretch (basic residues) spans 461-494 (RSKSASKTRSRSKSRSRSASRSPSRSRSRSHSRS).

This sequence belongs to the splicing factor SR family. As to quaternary structure, found in a pre-mRNA splicing complex with SRSF4/SFRS4, SRSF5/SFRS5, SNRNP70, SNRPA1, SRRM1 and SRRM2. Interacts with PNN. Post-translationally, extensively phosphorylated on serine residues in the RS domain.

The protein resides in the nucleus speckle. Its function is as follows. Plays a role in alternative splice site selection during pre-mRNA splicing. Represses the splicing of MAPT/Tau exon 10. In Homo sapiens (Human), this protein is Serine/arginine-rich splicing factor 4 (SRSF4).